Consider the following 351-residue polypeptide: Ca(2+)/H(+) antiporter ChaA (351 aa).

11 helical membrane-spanning segments follow: residues 4 to 24, 25 to 45, 59 to 79, 86 to 106, 130 to 150, 156 to 176, 205 to 225, 241 to 261, 282 to 302, 303 to 323, and 331 to 351; these read IFFI…LMHW, PSAV…SYMG, IGGL…SLFA, GIVL…VAGL, GLLI…SVGM, LNLS…ALYF, VATI…ENLV, FIGV…SAII, IAMF…TSMP, LVFT…MIAI, and WFEG…FFLL.

Belongs to the Ca(2+):cation antiporter (CaCA) (TC 2.A.19) family. Cation/proton exchanger (CAX) subfamily. In terms of assembly, homotrimer.

The protein localises to the cell membrane. Its activity is regulated as follows. Calcium efflux is tightly regulated by intracellular pH. In terms of biological role, ca(+)/H(+) antiporter that extrudes calcium in exchange for external protons. Does not transport sodium or potassium. In Bacillus subtilis (strain 168), this protein is Ca(2+)/H(+) antiporter ChaA (chaA).